Here is a 96-residue protein sequence, read N- to C-terminus: Glycine-rich protein DC7.1 (96 aa).

The N-terminal stretch at 1-25 is a signal peptide; that stretch reads MGSKIFLLLGLSIAFALLISSEVAA. The segment at 29–66 is disordered; it reads SETTTEGASLDGGHHGGGGGGHYSGGGGHGGSHHGGGG. Tandem repeats lie at residues 42–50 and 61–67. Positions 42–67 are 2 approximate repeats of H-H-G(4,6)-H; that stretch reads HHGGGGGGHYSGGGGHGGSHHGGGGH. Gly residues predominate over residues 43-66; sequence HGGGGGGHYSGGGGHGGSHHGGGG.

This sequence belongs to the GRP family.

In terms of biological role, may be connected with the initiation of embryogenesis or with the metabolic changes produced by the removal of auxins. The polypeptide is Glycine-rich protein DC7.1 (Daucus carota (Wild carrot)).